The chain runs to 448 residues: Phosphoglucosamine mutase (448 aa).

The active-site Phosphoserine intermediate is the Ser-100. The Mg(2+) site is built by Ser-100, Asp-240, Asp-242, and Asp-244. Ser-100 carries the post-translational modification Phosphoserine.

Belongs to the phosphohexose mutase family. The cofactor is Mg(2+). In terms of processing, activated by phosphorylation.

It catalyses the reaction alpha-D-glucosamine 1-phosphate = D-glucosamine 6-phosphate. Functionally, catalyzes the conversion of glucosamine-6-phosphate to glucosamine-1-phosphate. In Bacillus pumilus (strain SAFR-032), this protein is Phosphoglucosamine mutase.